Here is a 132-residue protein sequence, read N- to C-terminus: Fertilization-influencing membrane protein (132 aa).

Residues P100–F120 form a helical membrane-spanning segment.

In terms of tissue distribution, testis-specific.

Its subcellular location is the cell membrane. Functionally, may play a role in sperm-oocyte fusion during fertilization. The chain is Fertilization-influencing membrane protein from Homo sapiens (Human).